The primary structure comprises 259 residues: Malonyl-[acyl-carrier protein] O-methyltransferase (259 aa).

It belongs to the methyltransferase superfamily.

It carries out the reaction malonyl-[ACP] + S-adenosyl-L-methionine = malonyl-[ACP] methyl ester + S-adenosyl-L-homocysteine. Its pathway is cofactor biosynthesis; biotin biosynthesis. In terms of biological role, converts the free carboxyl group of a malonyl-thioester to its methyl ester by transfer of a methyl group from S-adenosyl-L-methionine (SAM). It allows to synthesize pimeloyl-ACP via the fatty acid synthetic pathway. This chain is Malonyl-[acyl-carrier protein] O-methyltransferase, found in Anoxybacillus flavithermus (strain DSM 21510 / WK1).